The sequence spans 675 residues: Methionine--tRNA ligase (675 aa).

A 'HIGH' region motif is present at residues 15–25 (PYANGSIHLGH). Residues Cys-146, Cys-149, Cys-159, and Cys-162 each coordinate Zn(2+). Positions 332–336 (KMSKS) match the 'KMSKS' region motif. Residue Lys-335 coordinates ATP. The region spanning 574 to 675 (DFAKLDLRIA…AGAKPGMRVK (102 aa)) is the tRNA-binding domain.

The protein belongs to the class-I aminoacyl-tRNA synthetase family. MetG type 1 subfamily. In terms of assembly, homodimer. It depends on Zn(2+) as a cofactor.

The protein localises to the cytoplasm. The enzyme catalyses tRNA(Met) + L-methionine + ATP = L-methionyl-tRNA(Met) + AMP + diphosphate. Functionally, is required not only for elongation of protein synthesis but also for the initiation of all mRNA translation through initiator tRNA(fMet) aminoacylation. The polypeptide is Methionine--tRNA ligase (Tolumonas auensis (strain DSM 9187 / NBRC 110442 / TA 4)).